The chain runs to 642 residues: Mini-chromosome maintenance complex-binding protein (642 aa).

Positions A151–P161 are enriched in polar residues. The disordered stretch occupies residues A151 to A188. At S154 the chain carries Phosphoserine. Residue T160 is modified to Phosphothreonine. Phosphoserine is present on residues S167 and S298.

The protein belongs to the MCMBP family. As to quaternary structure, interacts with the MCM complex: associates with the MCM3-7 complex which lacks MCM2, while it does not interact with the MCM complex when MCM2 is present (MCM2-7 complex). Interacts with the RPA complex, when composed of all RPA1, RPA2 and RPA3 components, but not with RPA1 or RPA2 alone.

It is found in the nucleus. Its function is as follows. Associated component of the MCM complex that acts as a regulator of DNA replication. Binds to the MCM complex during late S phase and promotes the disassembly of the MCM complex from chromatin, thereby acting as a key regulator of pre-replication complex (pre-RC) unloading from replicated DNA. Can dissociate the MCM complex without addition of ATP; probably acts by destabilizing interactions of each individual subunits of the MCM complex. Required for sister chromatid cohesion. This chain is Mini-chromosome maintenance complex-binding protein (MCMBP), found in Bos taurus (Bovine).